The primary structure comprises 243 residues: UMP-CMP kinase 1 (243 aa).

29 to 34 serves as a coordination point for ATP; that stretch reads GSGKGT. The interval 49-78 is NMP; sequence SAGDLLREEAKYDTEQGTMIKNLMNEGKLV. A ribonucleoside 5'-phosphate contacts are provided by residues Arg-55, 76-78, and 103-106; these read KLV and GFPR. Residue Asn-110 coordinates CMP. The LID stretch occupies residues 141-149; sequence NRNQGRDDD. An ATP-binding site is contributed by Arg-142. A ribonucleoside 5'-phosphate contacts are provided by Arg-146 and Arg-157. Arg-185 is a binding site for ATP.

The protein belongs to the adenylate kinase family. UMP-CMP kinase subfamily. As to quaternary structure, monomer. Mg(2+) is required as a cofactor.

The protein resides in the cytoplasm. It is found in the nucleus. It carries out the reaction UMP + ATP = UDP + ADP. The catalysed reaction is CMP + ATP = CDP + ADP. The enzyme catalyses dCMP + ATP = dCDP + ADP. Functionally, catalyzes the phosphorylation of pyrimidine nucleoside monophosphates at the expense of ATP. Plays an important role in de novo pyrimidine nucleotide biosynthesis. Has preference for UMP and CMP as phosphate acceptors. In Oryza sativa subsp. japonica (Rice), this protein is UMP-CMP kinase 1.